Here is a 494-residue protein sequence, read N- to C-terminus: Glycogen synthase (494 aa).

K15 serves as a coordination point for ADP-alpha-D-glucose.

Belongs to the glycosyltransferase 1 family. Bacterial/plant glycogen synthase subfamily.

It catalyses the reaction [(1-&gt;4)-alpha-D-glucosyl](n) + ADP-alpha-D-glucose = [(1-&gt;4)-alpha-D-glucosyl](n+1) + ADP + H(+). It functions in the pathway glycan biosynthesis; glycogen biosynthesis. Synthesizes alpha-1,4-glucan chains using ADP-glucose. This chain is Glycogen synthase, found in Paramagnetospirillum magneticum (strain ATCC 700264 / AMB-1) (Magnetospirillum magneticum).